We begin with the raw amino-acid sequence, 493 residues long: Aspartyl/glutamyl-tRNA(Asn/Gln) amidotransferase subunit B (493 aa).

This sequence belongs to the GatB/GatE family. GatB subfamily. As to quaternary structure, heterotrimer of A, B and C subunits.

The enzyme catalyses L-glutamyl-tRNA(Gln) + L-glutamine + ATP + H2O = L-glutaminyl-tRNA(Gln) + L-glutamate + ADP + phosphate + H(+). It carries out the reaction L-aspartyl-tRNA(Asn) + L-glutamine + ATP + H2O = L-asparaginyl-tRNA(Asn) + L-glutamate + ADP + phosphate + 2 H(+). In terms of biological role, allows the formation of correctly charged Asn-tRNA(Asn) or Gln-tRNA(Gln) through the transamidation of misacylated Asp-tRNA(Asn) or Glu-tRNA(Gln) in organisms which lack either or both of asparaginyl-tRNA or glutaminyl-tRNA synthetases. The reaction takes place in the presence of glutamine and ATP through an activated phospho-Asp-tRNA(Asn) or phospho-Glu-tRNA(Gln). This chain is Aspartyl/glutamyl-tRNA(Asn/Gln) amidotransferase subunit B, found in Aromatoleum aromaticum (strain DSM 19018 / LMG 30748 / EbN1) (Azoarcus sp. (strain EbN1)).